The sequence spans 538 residues: Sucrose transport protein SUT1 (538 aa).

Topologically, residues 1 to 52 (MARGSGAGGGGGGGGGGLELSVGVGGGGGARGGGGGEAAAAVETAAPISLGR) are cytoplasmic. Residues 53-73 (LILSGMVAGGVQYGWALQLSL) form a helical membrane-spanning segment. Topologically, residues 74–81 (LTPYVQTL) are extracellular. The chain crosses the membrane as a helical span at residues 82-102 (GLSHALTSFMWLCGPIAGMVV). Over 103–123 (QPCVGLYSDRCTSKWGRRRPY) the chain is Cytoplasmic. A helical membrane pass occupies residues 124-144 (ILTGCVLICLAVVVIGFSADI). Topologically, residues 145-162 (GYAMGDTKEDCSVYHGSR) are extracellular. Residues 163-183 (WHAAIVYVLGFWLLDFSNNTV) form a helical membrane-spanning segment. Over 184–198 (QGPARALMADLSGRH) the chain is Cytoplasmic. The helical transmembrane segment at 199 to 219 (GPGTANSIFCSWMAMGNILGY) threads the bilayer. Residues 220–247 (SSGSTNNWHKWFPFLKTRACCEACANLK) are Extracellular-facing. Residues 248 to 268 (GAFLVAVIFLSLCLVITLIFA) traverse the membrane as a helical segment. Over 269–306 (KEVPFKGNAALPTKSNEPAEPEGTGPLAVLKGFRNLPT) the chain is Cytoplasmic. Residues 307–327 (GMPSVLIVTGLTWLSWFPFIL) form a helical membrane-spanning segment. Over 328-357 (YDTDWMGREIYHGDPKGTDPQIEAFNQGVR) the chain is Extracellular. Residues 358 to 378 (AGAFGLLLNSIVLGFSSFLIE) form a helical membrane-spanning segment. Residues 379–388 (PMCRKVGPRV) lie on the Cytoplasmic side of the membrane. A helical transmembrane segment spans residues 389-409 (VWVTSNFLVCIAMAATALISF). At 410–433 (WSLKDFHGTVQKAITADKSIKAVC) the chain is on the extracellular side. The chain crosses the membrane as a helical span at residues 434–454 (LVLFAFLGVPLAVLYSVPFAV). Topologically, residues 455 to 470 (TAQLAATRGGGQGLCT) are cytoplasmic. A helical membrane pass occupies residues 471–491 (GVLNISIVIPQVVIALGAGPW). Residues 492–499 (DELFGKGN) are Extracellular-facing. The chain crosses the membrane as a helical span at residues 500 to 520 (IPAFGLASGFALIGGVAGIFL). Residues 521 to 538 (LPKISKRQFRSVSMGGGH) are Cytoplasmic-facing.

This sequence belongs to the glycoside-pentoside-hexuronide (GPH) cation symporter transporter (TC 2.A.2.4) family. Homodimer.

It is found in the cell membrane. Its pathway is glycan biosynthesis; sucrose metabolism. Responsible for the transport of sucrose into the cell, with the concomitant uptake of protons (symport system). May also transport other glucosides. May be required for apoplastic phloem sucrose loading in source tissues (e.g. leaves) in order to transport it to sink tissues (e.g. roots, flowers). In Oryza sativa subsp. indica (Rice), this protein is Sucrose transport protein SUT1 (SUT1).